The sequence spans 114 residues: Small ribosomal subunit protein uS15 (114 aa).

It belongs to the universal ribosomal protein uS15 family.

The polypeptide is Small ribosomal subunit protein uS15 (RpS13) (Musca domestica (House fly)).